Here is a 275-residue protein sequence, read N- to C-terminus: Membrane protein insertase MisCB (275 aa).

Positions M1 to L18 are cleaved as a signal peptide. A lipid anchor (N-palmitoyl cysteine) is attached at C19. A lipid anchor (S-diacylglycerol cysteine) is attached at C19. The next 5 membrane-spanning stretches (helical) occupy residues Y63 to V83, A139 to I159, W172 to V192, L219 to L239, and P240 to T260.

Belongs to the OXA1/ALB3/YidC family. Type 2 subfamily. As to quaternary structure, mostly monomeric, it may also form dimers. Interacts with SpoIIIAE. Forms a complex with the F(1)F(0) ATP synthase in which can be found the alpha, beta, gamma, delta and epsilon subunits of F(1) and a, b and subunits of F(0). YqgA is found in the same complex.

It is found in the cell membrane. Its function is as follows. Required for the insertion and/or proper folding and/or complex formation of integral membrane proteins into the membrane. Involved in integration of membrane proteins that insert both dependently and independently of the Sec translocase complex, as well as at least some lipoproteins. Also involved in protein secretion processes. It has an overlapping, although partly distinct, function compared to SpoIIIJ(MisCB). The chain is Membrane protein insertase MisCB (misCB) from Bacillus subtilis (strain 168).